The chain runs to 221 residues: Late embryogenesis abundant protein, group 3 (221 aa).

Positions 1–221 (MASHQDKASY…KDSSTITRDH (221 aa)) are disordered. A compositionally biased stretch (basic and acidic residues) spans 33–42 (TAQHAKDRAA). Low complexity predominate over residues 43–52 (DAAGHAAGKG). Composition is skewed to basic and acidic residues over residues 53–63 (QDAKEATKQKA) and 72–147 (KKTD…KQKA). The span at 212 to 221 (KDSSTITRDH) shows a compositional bias: polar residues.

This sequence belongs to the LEA type 4 family.

The chain is Late embryogenesis abundant protein, group 3 (MGL3) from Zea mays (Maize).